The primary structure comprises 255 residues: Aliphatic sulfonates import ATP-binding protein SsuB (255 aa).

One can recognise an ABC transporter domain in the interval 12–233 (LLLNAVSKHY…RLGSVRLAEL (222 aa)). ATP is bound at residue 44-51 (GRSGGGKS).

It belongs to the ABC transporter superfamily. Aliphatic sulfonates importer (TC 3.A.1.17.2) family. As to quaternary structure, the complex is composed of two ATP-binding proteins (SsuB), two transmembrane proteins (SsuC) and a solute-binding protein (SsuA).

It is found in the cell inner membrane. It catalyses the reaction ATP + H2O + aliphatic sulfonate-[sulfonate-binding protein]Side 1 = ADP + phosphate + aliphatic sulfonateSide 2 + [sulfonate-binding protein]Side 1.. Functionally, part of the ABC transporter complex SsuABC involved in aliphatic sulfonates import. Responsible for energy coupling to the transport system. The chain is Aliphatic sulfonates import ATP-binding protein SsuB from Shigella flexneri serotype 5b (strain 8401).